We begin with the raw amino-acid sequence, 702 residues long: Elongation factor G (702 aa).

One can recognise a tr-type G domain in the interval 8-290 (CQYRNIGISA…AIIEYLPAPN (283 aa)). GTP is bound by residues 17-24 (AHIDAGKT), 88-92 (DTPGH), and 142-145 (NKMD).

The protein belongs to the TRAFAC class translation factor GTPase superfamily. Classic translation factor GTPase family. EF-G/EF-2 subfamily.

Its subcellular location is the cytoplasm. Catalyzes the GTP-dependent ribosomal translocation step during translation elongation. During this step, the ribosome changes from the pre-translocational (PRE) to the post-translocational (POST) state as the newly formed A-site-bound peptidyl-tRNA and P-site-bound deacylated tRNA move to the P and E sites, respectively. Catalyzes the coordinated movement of the two tRNA molecules, the mRNA and conformational changes in the ribosome. This chain is Elongation factor G, found in Buchnera aphidicola subsp. Schizaphis graminum (strain Sg).